Reading from the N-terminus, the 331-residue chain is MNAPHMNDTAADAATLDDAAAPAGRPALTRREQKEAYENNKLFKRIVRQVGQAIGDYNMIEQGDKVMVCLSGGKDSYAMLDVLLRLRERAPIDFDIVAVNLDQKQPGFPEHVLPEYLKQVGVPFHIENQDTYSIVKRLVPEGKTTCSLCSRLRRGILYRVAGELGATKIALGHHRDDIVQTLLLNMFYGGKLKGMPPKLQSDDGKNIVIRPLAYVKETDLEKYAELREFPIIPCNLCGSQPNLKRAEMKALIREWDKRFPGRVDNMFNALAKVVPSHLMDTTLYPFQSLRATGEADPQGDIAFDEEPCASGDDAAAPGAAQPISIVQFDDL.

Positions 1–33 (MNAPHMNDTAADAATLDDAAAPAGRPALTRREQ) are disordered. Over residues 8-23 (DTAADAATLDDAAAPA) the composition is skewed to low complexity. The PP-loop motif motif lies at 71–76 (SGGKDS). [4Fe-4S] cluster is bound by residues Cys146, Cys149, and Cys237.

Belongs to the TtcA family. Homodimer. The cofactor is Mg(2+). Requires [4Fe-4S] cluster as cofactor.

It is found in the cytoplasm. It catalyses the reaction cytidine(32) in tRNA + S-sulfanyl-L-cysteinyl-[cysteine desulfurase] + AH2 + ATP = 2-thiocytidine(32) in tRNA + L-cysteinyl-[cysteine desulfurase] + A + AMP + diphosphate + H(+). The protein operates within tRNA modification. Catalyzes the ATP-dependent 2-thiolation of cytidine in position 32 of tRNA, to form 2-thiocytidine (s(2)C32). The sulfur atoms are provided by the cysteine/cysteine desulfurase (IscS) system. This is tRNA-cytidine(32) 2-sulfurtransferase from Burkholderia cenocepacia (strain HI2424).